The chain runs to 274 residues: Cytochrome b-c1 complex subunit Rieske, mitochondrial (274 aa).

The Mitochondrial matrix portion of the chain corresponds to 79–103 (SHTDVKVPDFYDYRRLEVLDSTKSS). A helical membrane pass occupies residues 104–140 (RESSEARKGFSYLVTAVTTVGVAYAAKNVVTQFISSM). Over 141–274 (SASADVLAMA…FTGDDVVVVG (134 aa)) the chain is Mitochondrial intermembrane. A Rieske domain is found at 187–272 (EAAVELSQLR…YEFTGDDVVV (86 aa)). Positions 217, 219, 236, 239, and 241 each coordinate [2Fe-2S] cluster. Cysteines 222 and 238 form a disulfide.

Belongs to the Rieske iron-sulfur protein family. As to quaternary structure, component of the ubiquinol-cytochrome c oxidoreductase (cytochrome b-c1 complex, complex III, CIII), a multisubunit enzyme composed of 11 subunits. The complex is composed of 3 respiratory subunits cytochrome b, cytochrome c1 and Rieske protein UQCRFS1, 2 core protein subunits UQCRC1/QCR1 and UQCRC2/QCR2, and 6 low-molecular weight protein subunits UQCRH/QCR6, UQCRB/QCR7, UQCRQ/QCR8, UQCR10/QCR9, UQCR11/QCR10 and subunit 9, the cleavage product of Rieske protein UQCRFS1. The complex exists as an obligatory dimer and forms supercomplexes (SCs) in the inner mitochondrial membrane with NADH-ubiquinone oxidoreductase (complex I, CI) and cytochrome c oxidase (complex IV, CIV), resulting in different assemblies (supercomplex SCI(1)III(2)IV(1) and megacomplex MCI(2)III(2)IV(2)). Incorporation of the Rieske protein UQCRFS1 is the penultimate step in complex III assembly. Interacts with TTC19, which is involved in the clearance of UQCRFS1 fragments. Component of the ubiquinol-cytochrome c oxidoreductase (cytochrome b-c1 complex, complex III, CIII). Subunit 9 corresponds to the mitochondrial targeting sequence (MTS) of Rieske protein UQCRFS1. It is retained after processing and incorporated inside complex III, where it remains bound to the complex and localizes between the 2 core subunits UQCRC1/QCR1 and UQCRC2/QCR2. [2Fe-2S] cluster is required as a cofactor. Post-translationally, proteolytic processing is necessary for the correct insertion of UQCRFS1 in the complex III dimer. Several fragments are generated during UQCRFS1 insertion, most probably due to the endogenous matrix-processing peptidase (MPP) activity of the 2 core protein subunits UQCRC1/QCR1 and UQCRC2/QCR2, which are homologous to the 2 mitochondrial-processing peptidase (MPP) subunits beta-MPP and alpha-MPP respectively. The action of the protease is also necessary for the clearance of the UQCRFS1 fragments.

Its subcellular location is the mitochondrion inner membrane. It catalyses the reaction a quinol + 2 Fe(III)-[cytochrome c](out) = a quinone + 2 Fe(II)-[cytochrome c](out) + 2 H(+)(out). Component of the ubiquinol-cytochrome c oxidoreductase, a multisubunit transmembrane complex that is part of the mitochondrial electron transport chain which drives oxidative phosphorylation. The respiratory chain contains 3 multisubunit complexes succinate dehydrogenase (complex II, CII), ubiquinol-cytochrome c oxidoreductase (cytochrome b-c1 complex, complex III, CIII) and cytochrome c oxidase (complex IV, CIV), that cooperate to transfer electrons derived from NADH and succinate to molecular oxygen, creating an electrochemical gradient over the inner membrane that drives transmembrane transport and the ATP synthase. The cytochrome b-c1 complex catalyzes electron transfer from ubiquinol to cytochrome c, linking this redox reaction to translocation of protons across the mitochondrial inner membrane, with protons being carried across the membrane as hydrogens on the quinol. In the process called Q cycle, 2 protons are consumed from the matrix, 4 protons are released into the intermembrane space and 2 electrons are passed to cytochrome c. The Rieske protein is a catalytic core subunit containing a [2Fe-2S] iron-sulfur cluster. It cycles between 2 conformational states during catalysis to transfer electrons from the quinol bound in the Q(0) site in cytochrome b to cytochrome c1. Incorporation of UQCRFS1 is the penultimate step in complex III assembly. Its function is as follows. Component of the ubiquinol-cytochrome c oxidoreductase (cytochrome b-c1 complex, complex III, CIII). UQCRFS1 undergoes proteolytic processing once it is incorporated in the complex III dimer. One of the fragments, called subunit 9, corresponds to its mitochondrial targeting sequence (MTS). The proteolytic processing is necessary for the correct insertion of UQCRFS1 in the complex III dimer, but the persistence of UQCRFS1-derived fragments may prevent newly imported UQCRFS1 to be processed and assembled into complex III and is detrimental for the complex III structure and function. This chain is Cytochrome b-c1 complex subunit Rieske, mitochondrial (UQCRFS1), found in Chlorocebus aethiops (Green monkey).